The following is a 455-amino-acid chain: 12S seed storage protein CRB (455 aa).

Positions 1–24 (MGRVSSIISFSLTLLILFNGYTAQ) are cleaved as a signal peptide. 2 cysteine pairs are disulfide-bonded: Cys-30-Cys-63 and Cys-106-Cys-276. Cupin type-1 domains follow at residues 35 to 229 (LNAL…ETAQ) and 282 to 431 (ENLD…EEAK). Thr-109 bears the Phosphothreonine mark. At Tyr-299 the chain carries Phosphotyrosine. Phosphoserine occurs at positions 301 and 367. Phosphothreonine is present on residues Thr-395 and Thr-420. The residue at position 436 (Ser-436) is a Phosphoserine.

It belongs to the 11S seed storage protein (globulins) family. Hexamer; each subunit is composed of an acidic and a basic chain derived from a single precursor and linked by a disulfide bond. Post-translationally, ubiquitinated. In terms of processing, proteolytically processed during seed maturation at a conserved Asn-Gly peptide bond by an asparaginyl endopeptidase to produce two mature polypeptides referred to as alpha and beta subunits that are joined together by a disulfide bond. Phosphorylated in seeds on some Tyr residues in response to abscisic acid (ABA). Accumulates in seeds 8 days after anthesis.

Its subcellular location is the protein storage vacuole. In terms of biological role, seed storage protein. The sequence is that of 12S seed storage protein CRB (CRB) from Arabidopsis thaliana (Mouse-ear cress).